The chain runs to 363 residues: Dihydroorotate dehydrogenase (quinone) (363 aa).

FMN-binding positions include 70–74 (AGFDK) and threonine 94. Lysine 74 is a binding site for substrate. 119-123 (NRMGF) is a substrate binding site. Residues asparagine 147 and asparagine 180 each coordinate FMN. Asparagine 180 lines the substrate pocket. Serine 183 functions as the Nucleophile in the catalytic mechanism. Asparagine 185 lines the substrate pocket. FMN contacts are provided by lysine 216 and threonine 244. 245–246 (NT) lines the substrate pocket. FMN contacts are provided by residues glycine 270, glycine 299, and 320 to 321 (YT).

This sequence belongs to the dihydroorotate dehydrogenase family. Type 2 subfamily. As to quaternary structure, monomer. The cofactor is FMN.

It localises to the cell membrane. It catalyses the reaction (S)-dihydroorotate + a quinone = orotate + a quinol. It functions in the pathway pyrimidine metabolism; UMP biosynthesis via de novo pathway; orotate from (S)-dihydroorotate (quinone route): step 1/1. Catalyzes the conversion of dihydroorotate to orotate with quinone as electron acceptor. This Corynebacterium diphtheriae (strain ATCC 700971 / NCTC 13129 / Biotype gravis) protein is Dihydroorotate dehydrogenase (quinone).